The following is a 90-amino-acid chain: DNA-directed RNA polymerase subunit omega (90 aa).

This sequence belongs to the RNA polymerase subunit omega family. The RNAP catalytic core consists of 2 alpha, 1 beta, 1 beta' and 1 omega subunit. When a sigma factor is associated with the core the holoenzyme is formed, which can initiate transcription.

The enzyme catalyses RNA(n) + a ribonucleoside 5'-triphosphate = RNA(n+1) + diphosphate. Functionally, promotes RNA polymerase assembly. Latches the N- and C-terminal regions of the beta' subunit thereby facilitating its interaction with the beta and alpha subunits. This is DNA-directed RNA polymerase subunit omega from Streptomyces griseus subsp. griseus (strain JCM 4626 / CBS 651.72 / NBRC 13350 / KCC S-0626 / ISP 5235).